Here is a 332-residue protein sequence, read N- to C-terminus: NADH-quinone oxidoreductase subunit H (332 aa).

9 helical membrane-spanning segments follow: residues 4–24 (FAFF…IFAS), 44–64 (IGPD…MIKL), 78–98 (FIFA…LAAI), 120–140 (VALL…FLGG), 165–185 (VGAL…LVDI), 194–214 (FSWL…ALFI), 255–275 (IAGA…FWII), 279–299 (IMMI…RAAF), and 312–332 (YLIL…AVLL).

Belongs to the complex I subunit 1 family. As to quaternary structure, NDH-1 is composed of 14 different subunits. Subunits NuoA, H, J, K, L, M, N constitute the membrane sector of the complex.

It is found in the cell inner membrane. It carries out the reaction a quinone + NADH + 5 H(+)(in) = a quinol + NAD(+) + 4 H(+)(out). In terms of biological role, NDH-1 shuttles electrons from NADH, via FMN and iron-sulfur (Fe-S) centers, to quinones in the respiratory chain. The immediate electron acceptor for the enzyme in this species is believed to be ubiquinone. Couples the redox reaction to proton translocation (for every two electrons transferred, four hydrogen ions are translocated across the cytoplasmic membrane), and thus conserves the redox energy in a proton gradient. This subunit may bind ubiquinone. The chain is NADH-quinone oxidoreductase subunit H from Campylobacter jejuni subsp. doylei (strain ATCC BAA-1458 / RM4099 / 269.97).